A 102-amino-acid polypeptide reads, in one-letter code: MYAIIETGGKQIKVEAGQEIYIEKLDVEAGETVTFDKVLFVGGENVKVGSPVVEGATVTAKVEKHGRAKKIIVFKYKAKKNNRKKQGHRQPYTKLVVEAINA.

The protein belongs to the bacterial ribosomal protein bL21 family. In terms of assembly, part of the 50S ribosomal subunit. Contacts protein L20.

Its function is as follows. This protein binds to 23S rRNA in the presence of protein L20. This Bacillus cytotoxicus (strain DSM 22905 / CIP 110041 / 391-98 / NVH 391-98) protein is Large ribosomal subunit protein bL21.